A 74-amino-acid polypeptide reads, in one-letter code: UPF0291 protein EF_0064 (74 aa).

The segment at 53–74 (YDPTGEDVTPEKLKEEQQKYFD) is disordered. Basic and acidic residues predominate over residues 61–74 (TPEKLKEEQQKYFD).

This sequence belongs to the UPF0291 family.

It is found in the cytoplasm. The sequence is that of UPF0291 protein EF_0064 from Enterococcus faecalis (strain ATCC 700802 / V583).